We begin with the raw amino-acid sequence, 202 residues long: Glycerol-3-phosphate acyltransferase (202 aa).

6 helical membrane-spanning segments follow: residues 2-22, 54-74, 85-105, 120-140, 141-161, and 162-182; these read MIVV…GYVI, FIVT…PIWF, FFTH…YPIY, VVLG…FGVL, YIFK…VIGS, and LIIQ…ILIV.

This sequence belongs to the PlsY family. In terms of assembly, probably interacts with PlsX.

It is found in the cell membrane. The catalysed reaction is an acyl phosphate + sn-glycerol 3-phosphate = a 1-acyl-sn-glycero-3-phosphate + phosphate. Its pathway is lipid metabolism; phospholipid metabolism. Its function is as follows. Catalyzes the transfer of an acyl group from acyl-phosphate (acyl-PO(4)) to glycerol-3-phosphate (G3P) to form lysophosphatidic acid (LPA). This enzyme utilizes acyl-phosphate as fatty acyl donor, but not acyl-CoA or acyl-ACP. In Staphylococcus haemolyticus (strain JCSC1435), this protein is Glycerol-3-phosphate acyltransferase.